Here is a 343-residue protein sequence, read N- to C-terminus: Sodium/bile acid cotransporter 7 (343 aa).

Topologically, residues 1–10 (MGLLERLRKE) are cytoplasmic. The helical transmembrane segment at 11-31 (WFIVGIILVIAAAKLEPTIGG) threads the bilayer. The Extracellular segment spans residues 32–37 (KGGPLK). A helical transmembrane segment spans residues 38–58 (PEITITYIAVSAIFFNSGLSL). Over 59 to 71 (KTEELTNALMHVK) the chain is Cytoplasmic. The helical transmembrane segment at 72–92 (LHLFVQLFTLVFFPTAIWVFL) threads the bilayer. Topologically, residues 93–116 (QVLSLTPINEWLLKGLQTVSCMPP) are extracellular. The chain crosses the membrane as a helical span at residues 117 to 137 (PVSSAVILTKAVGGNEAAAIF). Asn-138 is a topological domain (cytoplasmic). The helical transmembrane segment at 139 to 159 (SAFGSFLGIVVTPLLLLLFLG) threads the bilayer. Residues 160 to 163 (SSSS) lie on the Extracellular side of the membrane. A helical membrane pass occupies residues 164–184 (VPFTSIFSQLFMTVVVPLIIG). Residues 185 to 201 (QIVRRYIKDWLERKKPP) are Cytoplasmic-facing. The helical transmembrane segment at 202–222 (FGAISSCVLLMIIYTTFCDTF) threads the bilayer. The Extracellular portion of the chain corresponds to 223–234 (SNPNIDLDTFSL). The chain crosses the membrane as a helical span at residues 235–255 (VIIVFIIFFIQLAFMLLTFLF). At 256–270 (STSKNTGFTPADTVA) the chain is on the cytoplasmic side. The chain crosses the membrane as a helical span at residues 271 to 291 (IVFCSTHKSLTLGIPMLKIVF). The Extracellular segment spans residues 292–298 (AGYEHLS). The chain crosses the membrane as a helical span at residues 299–319 (LISVPLLIYHPAQILLGSVLV). Residues 320-343 (PTIKSWMLSRQKALKLTRQPKVPL) lie on the Cytoplasmic side of the membrane.

The protein belongs to the bile acid:sodium symporter (BASS) (TC 2.A.28) family.

It is found in the cell membrane. The protein localises to the endoplasmic reticulum membrane. Its subcellular location is the golgi apparatus membrane. Its function is as follows. Involved in teeth and skeletal development. Has an essential role in the biosynthesis and trafficking of glycosaminoglycans and glycoproteins to produce a proper functioning extracellular matrix. Required for extracellular matrix mineralization. Also involved in the regulation of cellular calcium homeostasis. Does not show transport activity towards bile acids or steroid sulfates. The protein is Sodium/bile acid cotransporter 7 (slc10a7) of Xenopus tropicalis (Western clawed frog).